A 519-amino-acid chain; its full sequence is Apolipoprotein N-acyltransferase (519 aa).

Transmembrane regions (helical) follow at residues 6–26, 47–67, 83–103, 126–146, 174–194, and 206–226; these read APLG…IWIF, LTAI…ITGV, IAAF…FVWL, LFIL…SHSI, LLSA…IDFL, and WHYF…GWLL. A CN hydrolase domain is found at 244–482; it reads IQGNIPNQIK…YEIHAAPIYR (239 aa). Glu-285 functions as the Proton acceptor in the catalytic mechanism. Lys-343 is an active-site residue. The active-site Nucleophile is the Cys-394. A helical membrane pass occupies residues 496 to 516; that stretch reads VVFLLLVVSAIAWLYQIVFPL.

The protein belongs to the CN hydrolase family. Apolipoprotein N-acyltransferase subfamily.

The protein localises to the cell inner membrane. It catalyses the reaction N-terminal S-1,2-diacyl-sn-glyceryl-L-cysteinyl-[lipoprotein] + a glycerophospholipid = N-acyl-S-1,2-diacyl-sn-glyceryl-L-cysteinyl-[lipoprotein] + a 2-acyl-sn-glycero-3-phospholipid + H(+). It participates in protein modification; lipoprotein biosynthesis (N-acyl transfer). Functionally, catalyzes the phospholipid dependent N-acylation of the N-terminal cysteine of apolipoprotein, the last step in lipoprotein maturation. The polypeptide is Apolipoprotein N-acyltransferase (Synechocystis sp. (strain ATCC 27184 / PCC 6803 / Kazusa)).